Reading from the N-terminus, the 67-residue chain is Conotoxin TsMMSK-011 (67 aa).

An N-terminal signal peptide occupies residues 1 to 20 (MMSKLGVLLTICLLLFPLTA). A propeptide spanning residues 21–50 (VQLDGDQPADLPALRTQDIATDHSPWFDPV) is cleaved from the precursor. 3 disulfide bridges follow: Cys-53–Cys-65, Cys-54–Cys-61, and Cys-58–Cys-64. Pro-63 carries the 4-hydroxyproline modification.

Belongs to the conotoxin M superfamily. In terms of tissue distribution, expressed by the venom duct.

The protein resides in the secreted. This chain is Conotoxin TsMMSK-011, found in Conus tessulatus (Tessellate cone).